Reading from the N-terminus, the 605-residue chain is Probable serine/threonine-protein kinase DDB_G0286481 (605 aa).

Residues 5–25 (YQIFFLLYLLCILYVISCGYI) traverse the membrane as a helical segment. N-linked (GlcNAc...) asparagine glycosylation is present at asparagine 53. 2 stretches are compositionally biased toward low complexity: residues 54–81 (SSNNNNNNNNNNNNNNNNNNNNNNNNNN) and 89–104 (NCNNNSSNNNSDNKSN). Residues 54 to 170 (SSNNNNNNNN…LGGSMGSGSQ (117 aa)) form a disordered region. Asparagine 92, asparagine 93, asparagine 97, and asparagine 101 each carry an N-linked (GlcNAc...) asparagine glycan. Residues 105–123 (IKNKQHHHHSNFRNRRGKS) show a composition bias toward basic residues. N-linked (GlcNAc...) asparagine glycosylation is present at asparagine 127. Polar residues predominate over residues 144-155 (QSSSYDTSELHQ). An N-linked (GlcNAc...) asparagine glycan is attached at asparagine 280. The Protein kinase domain occupies 312-597 (YEVIQKIGRG…AKEAMKHPYF (286 aa)). ATP-binding positions include 318–326 (IGRGKYSEV) and lysine 341. Asparagine 390 carries N-linked (GlcNAc...) asparagine glycosylation. Aspartate 429 serves as the catalytic Proton acceptor. Asparagine 601 carries an N-linked (GlcNAc...) asparagine glycan.

The protein belongs to the protein kinase superfamily. CMGC Ser/Thr protein kinase family.

It localises to the membrane. The enzyme catalyses L-seryl-[protein] + ATP = O-phospho-L-seryl-[protein] + ADP + H(+). It catalyses the reaction L-threonyl-[protein] + ATP = O-phospho-L-threonyl-[protein] + ADP + H(+). This Dictyostelium discoideum (Social amoeba) protein is Probable serine/threonine-protein kinase DDB_G0286481.